Consider the following 1020-residue polypeptide: Sodium/potassium-transporting ATPase subunit alpha-2 (1020 aa).

A propeptide spanning residues 1 to 5 (MGRGA) is cleaved from the precursor. Residues 1–31 (MGRGAGREYSPAATTAENGGGKKKQKEKELD) form a disordered region. Topologically, residues 6 to 85 (GREYSPAATT…NALTPPPTTP (80 aa)) are cytoplasmic. A Phosphoserine modification is found at Ser10. The interval 80–82 (PPP) is interaction with phosphoinositide-3 kinase. The chain crosses the membrane as a helical span at residues 86-106 (EWVKFCRQLFGGFSILLWIGA). Topologically, residues 107 to 129 (ILCFLAFGIQAAMEDEPSNDNLY) are extracellular. A helical membrane pass occupies residues 130 to 150 (LGVVLAAVVIVTGCFSYYQEA). The Cytoplasmic portion of the chain corresponds to 151 to 286 (KSSKIMDSFK…VGRTPIAMEI (136 aa)). Residues 212–227 (DNSSLTGESEPQTRSP) are compositionally biased toward polar residues. A disordered region spans residues 212–231 (DNSSLTGESEPQTRSPEFTH). A helical transmembrane segment spans residues 287–306 (EHFIQLITGVAVFLGVSFFV). The Extracellular portion of the chain corresponds to 307–318 (LSLILGYSWLEA). The helical transmembrane segment at 319 to 336 (VIFLIGIIVANVPEGLLA) threads the bilayer. Over 337 to 769 (TVTVCLTLTA…EEGRLIFDNL (433 aa)) the chain is Cytoplasmic. Catalysis depends on Asp374, which acts as the 4-aspartylphosphate intermediate. Phosphoserine occurs at positions 439, 450, 496, and 559. Thr570 bears the Phosphothreonine mark. Phosphoserine occurs at positions 587 and 672. Residues Asp714 and Asp718 each contribute to the Mg(2+) site. The chain crosses the membrane as a helical span at residues 770-789 (KKSIAYTLTSNIPEITPFLL). Over 790-799 (FIIANIPLPL) the chain is Extracellular. The helical transmembrane segment at 800–820 (GTVTILCIDLGTDMVPAISLA) threads the bilayer. Residues 821–840 (YEAAESDIMKRQPRNPQTDK) lie on the Cytoplasmic side of the membrane. Residue Ser826 is modified to Phosphoserine. Residues 841–863 (LVNERLISMAYGQIGMIQALGGF) traverse the membrane as a helical segment. Residues 864 to 915 (FTYFVILAENGFLPSRLLGIRLDWDDRSMNDLEDSYGQEWTYEQRKVVEFTC) lie on the Extracellular side of the membrane. A helical transmembrane segment spans residues 916–935 (HTAFFASIVVVQWADLIICK). The Cytoplasmic portion of the chain corresponds to 936–948 (TRRNSVFQQGMKN). Ser940 carries the phosphoserine; by PKA modification. The helical transmembrane segment at 949 to 967 (KILIFGLLEETALAAFLSY) threads the bilayer. The Extracellular portion of the chain corresponds to 968–982 (CPGMGVALRMYPLKV). A helical membrane pass occupies residues 983–1003 (TWWFCAFPYSLLIFIYDEVRK). At 1004 to 1020 (LILRRYPGGWVEKETYY) the chain is on the cytoplasmic side.

The protein belongs to the cation transport ATPase (P-type) (TC 3.A.3) family. Type IIC subfamily. The sodium/potassium-transporting ATPase is composed of a catalytic alpha subunit, an auxiliary non-catalytic beta subunit and an additional regulatory subunit. Interacts with regulatory subunit FXYD1.

The protein localises to the membrane. It is found in the cell membrane. The enzyme catalyses K(+)(out) + Na(+)(in) + ATP + H2O = K(+)(in) + Na(+)(out) + ADP + phosphate + H(+). In terms of biological role, this is the catalytic component of the active enzyme, which catalyzes the hydrolysis of ATP coupled with the exchange of sodium and potassium ions across the plasma membrane. This action creates the electrochemical gradient of sodium and potassium, providing the energy for active transport of various nutrients. This is Sodium/potassium-transporting ATPase subunit alpha-2 (ATP1A2) from Bos taurus (Bovine).